A 309-amino-acid chain; its full sequence is MKPVIVVHGGAGKIVEELDATYRAGVKRAVLKGYDVLSQGGSALTAVEEAVIVLEDEQIFNAGHGSVLNEKGDIEMDAIIMDGKNLDSGAVSAIRNIANPIKLARLVMEKTDHMLLTCEGATLFAKAQGIPEVPNESLVTERSRKRWMKNLKENSNPVADQIGLGTVGAVAIDCEGNVACATSTGGLTNKMVGRVGDTACIGSGGYADNNVGAVSTTGHGESIMKVILARLILHHMEQGKSPEEAADAGLNYMKSRVGGIGGVIIVNSSGDWTAKFSTNQMSWAAVKDDQLHIGIYHGENNVTPLEKAL.

Threonine 166 acts as the Nucleophile in catalysis. Residues 194–197 (RVGD) and 217–220 (TGHG) each bind substrate.

This sequence belongs to the Ntn-hydrolase family. Heterodimer of an alpha and beta chain produced by autocleavage. Post-translationally, cleaved into an alpha and beta chain by autocatalysis; this activates the enzyme. The N-terminal residue of the beta subunit is responsible for the nucleophile hydrolase activity.

The protein resides in the cytoplasm. The catalysed reaction is L-asparagine + H2O = L-aspartate + NH4(+). It catalyses the reaction Cleavage of a beta-linked Asp residue from the N-terminus of a polypeptide.. In terms of biological role, has both L-asparaginase and beta-aspartyl peptidase activity. Does not have aspartylglucosaminidase activity and is inactive toward GlcNAc-L-Asn. Likewise, has no activity toward glutamine. The chain is Isoaspartyl peptidase/L-asparaginase (asrgl1) from Xenopus laevis (African clawed frog).